The primary structure comprises 145 residues: Venom protein 30.1 (145 aa).

A signal peptide spans 1–18; it reads MIIVKLFTCLLMVSSVLT.

In terms of processing, contains 5 disulfide bonds. As to expression, expressed by the venom gland.

Its subcellular location is the secreted. The sequence is that of Venom protein 30.1 from Lychas mucronatus (Chinese swimming scorpion).